Consider the following 179-residue polypeptide: ATP synthase subunit delta (179 aa).

The protein belongs to the ATPase delta chain family. As to quaternary structure, F-type ATPases have 2 components, F(1) - the catalytic core - and F(0) - the membrane proton channel. F(1) has five subunits: alpha(3), beta(3), gamma(1), delta(1), epsilon(1). F(0) has three main subunits: a(1), b(2) and c(10-14). The alpha and beta chains form an alternating ring which encloses part of the gamma chain. F(1) is attached to F(0) by a central stalk formed by the gamma and epsilon chains, while a peripheral stalk is formed by the delta and b chains.

The protein localises to the cell inner membrane. In terms of biological role, f(1)F(0) ATP synthase produces ATP from ADP in the presence of a proton or sodium gradient. F-type ATPases consist of two structural domains, F(1) containing the extramembraneous catalytic core and F(0) containing the membrane proton channel, linked together by a central stalk and a peripheral stalk. During catalysis, ATP synthesis in the catalytic domain of F(1) is coupled via a rotary mechanism of the central stalk subunits to proton translocation. Functionally, this protein is part of the stalk that links CF(0) to CF(1). It either transmits conformational changes from CF(0) to CF(1) or is implicated in proton conduction. The sequence is that of ATP synthase subunit delta from Cupriavidus pinatubonensis (strain JMP 134 / LMG 1197) (Cupriavidus necator (strain JMP 134)).